The following is a 538-amino-acid chain: Pentachlorophenol 4-monooxygenase (538 aa).

FAD is bound by residues 16–45 and 288–298; these read AVLIVGGGPTGLIAANELLRRGVSCRMIDR and YRKGNVFLAGD.

It belongs to the PheA/TfdB FAD monooxygenase family. Homodimer. The cofactor is FAD.

It catalyses the reaction pentachlorophenol + NADPH + O2 + H(+) = 2,3,5,6-tetrachloro-1,4-benzoquinone + chloride + NADP(+) + H2O. The catalysed reaction is 2,3,5,6-tetrachlorophenol + NADPH + O2 = 2,3,5,6-tetrachlorohydroquinone + NADP(+) + H2O. Its pathway is xenobiotic degradation; pentachlorophenol degradation. Dechlorination of pentachlorophenol to tetrachlorobenzoquinone. Also removes hydrogen and nitro, amino, and cyano groups from benzene ring at the para position in relation to the hydroxyl of phenol. The protein is Pentachlorophenol 4-monooxygenase (pcpB) of Sphingobium chlorophenolicum.